Consider the following 671-residue polypeptide: Polyadenylate-binding protein 8 (671 aa).

4 consecutive RRM domains span residues 45–123 (TSLY…YSVR), 133–210 (GNIF…PFVH), 224–301 (TNVY…KAQK), and 327–404 (SNLY…LAQR). The interval 467 to 526 (LVPGMRPGGSPMPNFFMPMMQQGQQQQQQQQQQQRPGGGRRGALPQPQQPSPMMQQQMHP) is disordered. Low complexity-rich tracts occupy residues 483-501 (MPMM…QQQR) and 508-525 (GALP…QQMH). One can recognise a PABC domain in the interval 573-650 (PIVALATRLA…AMDVLRSVAQ (78 aa)).

This sequence belongs to the polyadenylate-binding protein type-1 family. As to quaternary structure, interacts with ERD15/CID1. Interacts with Turnip mosaic virus (TuMV) VPg-Pro and RNA-dependent RNA polymerase (RdRp). Expressed predominantly in immature flowers.

It localises to the cytoplasm. Its subcellular location is the nucleus. Its function is as follows. Binds the poly(A) tail of mRNA. Appears to be an important mediator of the multiple roles of the poly(A) tail in mRNA biogenesis, stability and translation. During infection with potyvirus TuMV, acts as a potential integral component of the viral replicase complex that could play an important role in the regulation of potyviral RNA-dependent RNA polymerase (RdRp). This is Polyadenylate-binding protein 8 (PAB8) from Arabidopsis thaliana (Mouse-ear cress).